A 302-amino-acid chain; its full sequence is tRNA-cytidine(32) 2-sulfurtransferase (302 aa).

A PP-loop motif motif is present at residues 57–62 (SGGKDS). [4Fe-4S] cluster contacts are provided by Cys-132, Cys-135, and Cys-223.

The protein belongs to the TtcA family. As to quaternary structure, homodimer. Mg(2+) is required as a cofactor. [4Fe-4S] cluster serves as cofactor.

It is found in the cytoplasm. The enzyme catalyses cytidine(32) in tRNA + S-sulfanyl-L-cysteinyl-[cysteine desulfurase] + AH2 + ATP = 2-thiocytidine(32) in tRNA + L-cysteinyl-[cysteine desulfurase] + A + AMP + diphosphate + H(+). It participates in tRNA modification. Catalyzes the ATP-dependent 2-thiolation of cytidine in position 32 of tRNA, to form 2-thiocytidine (s(2)C32). The sulfur atoms are provided by the cysteine/cysteine desulfurase (IscS) system. The sequence is that of tRNA-cytidine(32) 2-sulfurtransferase from Marinobacter nauticus (strain ATCC 700491 / DSM 11845 / VT8) (Marinobacter aquaeolei).